We begin with the raw amino-acid sequence, 410 residues long: Serine/threonine transporter SstT (410 aa).

A run of 10 helical transmembrane segments spans residues 15 to 35 (GSLV…AWLS), 49 to 69 (FVNA…ISSI), 82 to 102 (PIVM…VVAS), 118 to 138 (IVPP…MVTN), 142 to 162 (AVMK…GFAF), 190 to 210 (FAPV…GFDA), 217 to 237 (LLGL…PLLV), 299 to 319 (MAGA…TLGI), 331 to 351 (LVAS…LLLI), and 358 to 378 (FGIP…IGVL).

This sequence belongs to the dicarboxylate/amino acid:cation symporter (DAACS) (TC 2.A.23) family.

Its subcellular location is the cell inner membrane. It catalyses the reaction L-serine(in) + Na(+)(in) = L-serine(out) + Na(+)(out). The catalysed reaction is L-threonine(in) + Na(+)(in) = L-threonine(out) + Na(+)(out). Functionally, involved in the import of serine and threonine into the cell, with the concomitant import of sodium (symport system). The polypeptide is Serine/threonine transporter SstT (Erwinia tasmaniensis (strain DSM 17950 / CFBP 7177 / CIP 109463 / NCPPB 4357 / Et1/99)).